The following is a 108-amino-acid chain: Acid stress chaperone HdeB (108 aa).

The signal sequence occupies residues 1-29 (MNISSLRKAFIFMGAVAALSLVNAQSALA). Lysine 93 carries the N6-acetyllysine modification.

It belongs to the HdeB family.

It localises to the periplasm. Its function is as follows. Required for optimal acid stress protection, which is important for survival of enteric bacteria in the acidic environment of the host stomach. Exhibits a chaperone-like activity at acidic pH by preventing the aggregation of many different periplasmic proteins. This is Acid stress chaperone HdeB from Escherichia coli O6:H1 (strain CFT073 / ATCC 700928 / UPEC).